A 318-amino-acid polypeptide reads, in one-letter code: 2,4-dinitroanisole O-demethylase subunit beta (318 aa).

It belongs to the metallo-beta-lactamase superfamily. In terms of assembly, part of the complex DnhAB composed of the 2,4-dinitroanisole O-demethylase alpha (DnhA) and beta (DnhB) subunits.

The enzyme catalyses 2,4-dinitroanisole + H2O = 2,4-dinitrophenol + methanol + H(+). Its function is as follows. Involved in the degradation of 2,4-dinitroanisole (DNAN), an insensitive munition ingredient used in explosive formulations as a replacement for 2,4,6-trinitrotoluene (TNT). Catalyzes the removal of the methyl group from 2,4-dinitroanisole (DNAN) to yield 2,4-dinitrophenol (2,4-DNP) and methanol. The protein is 2,4-dinitroanisole O-demethylase subunit beta of Nocardioides sp. (strain JS1661).